A 610-amino-acid polypeptide reads, in one-letter code: UvrABC system protein C (610 aa).

One can recognise a GIY-YIG domain in the interval 13–92; it reads TLPGVYLMKN…IKQHKPRYNA (80 aa). The region spanning 204 to 239 is the UVR domain; that stretch reads KDVLKDLYEEMRLLSEQLEFEKANHLLRTIRYIEKT.

The protein belongs to the UvrC family. Interacts with UvrB in an incision complex.

Its subcellular location is the cytoplasm. The UvrABC repair system catalyzes the recognition and processing of DNA lesions. UvrC both incises the 5' and 3' sides of the lesion. The N-terminal half is responsible for the 3' incision and the C-terminal half is responsible for the 5' incision. This is UvrABC system protein C from Protochlamydia amoebophila (strain UWE25).